Reading from the N-terminus, the 399-residue chain is Phosphate acyltransferase (399 aa).

It belongs to the PlsX family. As to quaternary structure, homodimer. Probably interacts with PlsY.

The protein localises to the cytoplasm. It catalyses the reaction a fatty acyl-[ACP] + phosphate = an acyl phosphate + holo-[ACP]. Its pathway is lipid metabolism; phospholipid metabolism. In terms of biological role, catalyzes the reversible formation of acyl-phosphate (acyl-PO(4)) from acyl-[acyl-carrier-protein] (acyl-ACP). This enzyme utilizes acyl-ACP as fatty acyl donor, but not acyl-CoA. This Rhodobacter capsulatus (Rhodopseudomonas capsulata) protein is Phosphate acyltransferase.